Here is a 214-residue protein sequence, read N- to C-terminus: Cytochrome b (214 aa).

A run of 4 helical transmembrane segments spans residues 31–51 (FGSMLLACLMIQTVTGFFLAI), 75–96 (WIMQNTHAIGASMFFMCIYTHI), 111–131 (WLSGTTLLIVLMRTAFFGYVL), and 176–196 (FFALHFILPFIIISLSSIHII). Residues His-81 and His-95 each contribute to the heme b site. Positions 180 and 194 each coordinate heme b. His-199 is an a ubiquinone binding site.

The protein belongs to the cytochrome b family. In terms of assembly, the cytochrome bc1 complex contains 3 respiratory subunits (MT-CYB, CYC1 and UQCRFS1), 2 core proteins (UQCRC1 and UQCRC2) and probably 6 low-molecular weight proteins. Heme b is required as a cofactor.

It localises to the mitochondrion inner membrane. In terms of biological role, component of the ubiquinol-cytochrome c reductase complex (complex III or cytochrome b-c1 complex) that is part of the mitochondrial respiratory chain. The b-c1 complex mediates electron transfer from ubiquinol to cytochrome c. Contributes to the generation of a proton gradient across the mitochondrial membrane that is then used for ATP synthesis. This chain is Cytochrome b (MT-CYB), found in Cerastes cerastes (Horned desert viper).